The primary structure comprises 329 residues: Quinone-oxidoreductase QR1, chloroplastic (329 aa).

This sequence belongs to the zinc-containing alcohol dehydrogenase family. Quinone oxidoreductase subfamily.

It is found in the plastid. Its subcellular location is the chloroplast outer membrane. It carries out the reaction 2 a quinone + NADPH + H(+) = 2 a 1,4-benzosemiquinone + NADP(+). Inhibited by dicumarol. Its function is as follows. NADPH-dependent single-electron reducing quinone reductase. Involved in haustorium initiation in parasitic plants through redox cycling of exogenous haustorium-inducing factors. Can use 9,10-phenanthrenequinone (PAQ), 1,2-naphthoquinone, 5-hydroxy-1,4-naphthoquinone (juglone) and 2,6-dimethoxy-p-benzoquinone (DMBQ) as substrates, but has no activity with menadione, diamide, 2,3-dimethoxy-5-methyl-1,4-benzoquinone or 1,4-naphthoquinone. In Triphysaria versicolor (Yellow owl's clover), this protein is Quinone-oxidoreductase QR1, chloroplastic.